Here is a 631-residue protein sequence, read N- to C-terminus: Alpha-dioxygenase 2 (631 aa).

An N-terminal signal peptide occupies residues methionine 1 to serine 20. Histidine 157 provides a ligand contact to heme b. Tyrosine 378 acts as the Proton acceptor in catalysis. Histidine 381 is a heme b binding site. Asparagine 583 is a glycosylation site (N-linked (GlcNAc...) asparagine).

It belongs to the peroxidase family. Heme b is required as a cofactor. In terms of tissue distribution, expressed in seedlings (cotyledons, young leaves, and hypocotyls), flowers, siliques and old leaves.

Its function is as follows. Alpha-dioxygenase that catalyzes the primary oxygenation of fatty acids into oxylipins. May be involved in the senescence process. This is Alpha-dioxygenase 2 (DOX2) from Arabidopsis thaliana (Mouse-ear cress).